The following is a 219-amino-acid chain: Exosomal polycystin-1-interacting protein (219 aa).

A signal peptide spans 1 to 19 (MAPPSRHCLLLISTLGVFA). Residues Asn29, Asn42, Asn95, Asn188, and Asn210 are each glycosylated (N-linked (GlcNAc...) asparagine).

The protein belongs to the EPCIP family. As to quaternary structure, homooligomer. Interacts with PKD1 (via the PKD repeats in the N-terminal extracellular region); the interaction is not dependent on N-glycosylation of either protein. N-glycosylated. Detected in the kidney and in the endothelium of large blood vessels (at protein level).

Its subcellular location is the vesicle. The protein localises to the secreted. The protein resides in the extracellular exosome. Likely to be involved with PKD1 in the detection, sequestration and exocytosis of senescent mitochondria. The sequence is that of Exosomal polycystin-1-interacting protein from Homo sapiens (Human).